The chain runs to 200 residues: NADH-quinone oxidoreductase subunit I (200 aa).

4Fe-4S ferredoxin-type domains are found at residues 73 to 102 (RLLESGNERCIGCGLCEKICVSNCIRMETT) and 112 to 141 (LNYSINFGRCVYCGLCADVCPELAIVHGGD). Residues cysteine 82, cysteine 85, cysteine 88, cysteine 92, cysteine 121, cysteine 124, cysteine 127, and cysteine 131 each contribute to the [4Fe-4S] cluster site.

It belongs to the complex I 23 kDa subunit family. In terms of assembly, NDH-1 is composed of 14 different subunits. Subunits NuoA, H, J, K, L, M, N constitute the membrane sector of the complex. [4Fe-4S] cluster is required as a cofactor.

Its subcellular location is the cell inner membrane. The enzyme catalyses a quinone + NADH + 5 H(+)(in) = a quinol + NAD(+) + 4 H(+)(out). Functionally, NDH-1 shuttles electrons from NADH, via FMN and iron-sulfur (Fe-S) centers, to quinones in the respiratory chain. The immediate electron acceptor for the enzyme in this species is believed to be ubiquinone. Couples the redox reaction to proton translocation (for every two electrons transferred, four hydrogen ions are translocated across the cytoplasmic membrane), and thus conserves the redox energy in a proton gradient. This chain is NADH-quinone oxidoreductase subunit I, found in Campylobacter hominis (strain ATCC BAA-381 / DSM 21671 / CCUG 45161 / LMG 19568 / NCTC 13146 / CH001A).